The chain runs to 420 residues: Glucose-1-phosphate adenylyltransferase (420 aa).

Alpha-D-glucose 1-phosphate-binding positions include Tyr107, Gly173, 188 to 189 (EK), and Ser206.

The protein belongs to the bacterial/plant glucose-1-phosphate adenylyltransferase family. As to quaternary structure, homotetramer.

The catalysed reaction is alpha-D-glucose 1-phosphate + ATP + H(+) = ADP-alpha-D-glucose + diphosphate. It participates in glycan biosynthesis; glycogen biosynthesis. Involved in the biosynthesis of ADP-glucose, a building block required for the elongation reactions to produce glycogen. Catalyzes the reaction between ATP and alpha-D-glucose 1-phosphate (G1P) to produce pyrophosphate and ADP-Glc. The protein is Glucose-1-phosphate adenylyltransferase of Shewanella frigidimarina (strain NCIMB 400).